We begin with the raw amino-acid sequence, 316 residues long: UDP-3-O-acylglucosamine N-acyltransferase 2 (316 aa).

Residue H230 is the Proton acceptor of the active site.

This sequence belongs to the transferase hexapeptide repeat family. LpxD subfamily. As to quaternary structure, homotrimer.

It catalyses the reaction a UDP-3-O-[(3R)-3-hydroxyacyl]-alpha-D-glucosamine + a (3R)-hydroxyacyl-[ACP] = a UDP-2-N,3-O-bis[(3R)-3-hydroxyacyl]-alpha-D-glucosamine + holo-[ACP] + H(+). The protein operates within bacterial outer membrane biogenesis; LPS lipid A biosynthesis. Functionally, catalyzes the N-acylation of UDP-3-O-acylglucosamine using 3-hydroxyacyl-ACP as the acyl donor. Is involved in the biosynthesis of lipid A, a phosphorylated glycolipid that anchors the lipopolysaccharide to the outer membrane of the cell. This chain is UDP-3-O-acylglucosamine N-acyltransferase 2, found in Sulfurimonas denitrificans (strain ATCC 33889 / DSM 1251) (Thiomicrospira denitrificans (strain ATCC 33889 / DSM 1251)).